Consider the following 797-residue polypeptide: Phenylalanine--tRNA ligase beta subunit (797 aa).

Positions 40 to 154 (MEGLSKLVVG…ADAKVGDSIF (115 aa)) constitute a tRNA-binding domain. Residues 407-482 (PILPKVSITL…RIYGYDNLPS (76 aa)) form the B5 domain. Mg(2+) is bound by residues Asp-460, Asp-466, Glu-469, and Glu-470. An FDX-ACB domain is found at 704–797 (PKVQAVHRDI…LVEKLDIEIR (94 aa)).

Belongs to the phenylalanyl-tRNA synthetase beta subunit family. Type 1 subfamily. Tetramer of two alpha and two beta subunits. Requires Mg(2+) as cofactor.

The protein resides in the cytoplasm. It catalyses the reaction tRNA(Phe) + L-phenylalanine + ATP = L-phenylalanyl-tRNA(Phe) + AMP + diphosphate + H(+). This chain is Phenylalanine--tRNA ligase beta subunit, found in Lactococcus lactis subsp. lactis (strain IL1403) (Streptococcus lactis).